Reading from the N-terminus, the 228-residue chain is Probable calcium-binding protein CML48 (228 aa).

EF-hand domains are found at residues E52–D87 and N121–V156. D65, N67, S69, and E76 together coordinate Ca(2+).

In terms of biological role, potential calcium sensor. The polypeptide is Probable calcium-binding protein CML48 (CML48) (Arabidopsis thaliana (Mouse-ear cress)).